The chain runs to 144 residues: Prefoldin subunit alpha (144 aa).

It belongs to the prefoldin alpha subunit family. As to quaternary structure, heterohexamer of two alpha and four beta subunits.

It is found in the cytoplasm. Functionally, molecular chaperone capable of stabilizing a range of proteins. Seems to fulfill an ATP-independent, HSP70-like function in archaeal de novo protein folding. This is Prefoldin subunit alpha from Methanococcus maripaludis (strain C5 / ATCC BAA-1333).